The following is a 124-amino-acid chain: Large ribosomal subunit protein bL12 (124 aa).

Belongs to the bacterial ribosomal protein bL12 family. As to quaternary structure, homodimer. Part of the ribosomal stalk of the 50S ribosomal subunit. Forms a multimeric L10(L12)X complex, where L10 forms an elongated spine to which 2 to 4 L12 dimers bind in a sequential fashion. Binds GTP-bound translation factors.

Functionally, forms part of the ribosomal stalk which helps the ribosome interact with GTP-bound translation factors. Is thus essential for accurate translation. This chain is Large ribosomal subunit protein bL12, found in Hamiltonella defensa subsp. Acyrthosiphon pisum (strain 5AT).